The following is a 207-amino-acid chain: MTKATIVLATRNAGKVAELADALRAYGLDVLGLDAFPQVGEIEETGTTFEENALLKARAVAEATGHVAVADDSGLEVDALERRPGVYSARYSDDTPDLPGDTRDARNNAKLLLELDGVPAERRTARFRCVMAACTPDGRHVFAEGAWEGHIALAPEGDNGFGYDPLFIDPQSGLHSAQLSRDEKNARSHRGKALRRLLELWPAFWRG.

10–15 (TRNAGK) serves as a coordination point for substrate. Glutamate 43 and aspartate 72 together coordinate Mg(2+). Residue aspartate 72 is the Proton acceptor of the active site. Substrate is bound by residues serine 73, 161-164 (FGYD), lysine 184, and 189-190 (HR).

This sequence belongs to the HAM1 NTPase family. Homodimer. Mg(2+) is required as a cofactor.

It catalyses the reaction XTP + H2O = XMP + diphosphate + H(+). It carries out the reaction dITP + H2O = dIMP + diphosphate + H(+). The catalysed reaction is ITP + H2O = IMP + diphosphate + H(+). In terms of biological role, pyrophosphatase that catalyzes the hydrolysis of nucleoside triphosphates to their monophosphate derivatives, with a high preference for the non-canonical purine nucleotides XTP (xanthosine triphosphate), dITP (deoxyinosine triphosphate) and ITP. Seems to function as a house-cleaning enzyme that removes non-canonical purine nucleotides from the nucleotide pool, thus preventing their incorporation into DNA/RNA and avoiding chromosomal lesions. This chain is dITP/XTP pyrophosphatase, found in Nitratidesulfovibrio vulgaris (strain ATCC 29579 / DSM 644 / CCUG 34227 / NCIMB 8303 / VKM B-1760 / Hildenborough) (Desulfovibrio vulgaris).